The chain runs to 442 residues: Mitochondrial distribution and morphology protein 12 (442 aa).

Residues 1-442 (MSIDINWEAA…VYPSFWTFLV (442 aa)) enclose the SMP-LTD domain. Disordered regions lie at residues 67–125 (NDFY…RVGY), 202–277 (LSLA…RRMR), and 364–387 (EGYH…RRSN). Over residues 69-80 (FYEEDEDGEDLS) the composition is skewed to acidic residues. A compositionally biased stretch (polar residues) spans 90–100 (PSSQGLSQSTP). Over residues 101–112 (NGDAGSSNSSSN) the composition is skewed to low complexity. Basic and acidic residues predominate over residues 213–222 (RQRERARSSD). Residues 227-245 (SPQSRSRPSTSSTRQRTST) are compositionally biased toward low complexity.

This sequence belongs to the MDM12 family. As to quaternary structure, component of the ER-mitochondria encounter structure (ERMES) or MDM complex, composed of MMM1, MDM10, MDM12 and MDM34. An MMM1 homodimer associates with one molecule of MDM12 on each side in a pairwise head-to-tail manner, and the SMP-LTD domains of MMM1 and MDM12 generate a continuous hydrophobic tunnel for phospholipid trafficking.

It localises to the mitochondrion outer membrane. The protein resides in the endoplasmic reticulum membrane. Component of the ERMES/MDM complex, which serves as a molecular tether to connect the endoplasmic reticulum (ER) and mitochondria. Components of this complex are involved in the control of mitochondrial shape and protein biogenesis, and function in nonvesicular lipid trafficking between the ER and mitochondria. MDM12 is required for the interaction of the ER-resident membrane protein MMM1 and the outer mitochondrial membrane-resident beta-barrel protein MDM10. The MDM12-MMM1 subcomplex functions in the major beta-barrel assembly pathway that is responsible for biogenesis of all mitochondrial outer membrane beta-barrel proteins, and acts in a late step after the SAM complex. The MDM10-MDM12-MMM1 subcomplex further acts in the TOM40-specific pathway after the action of the MDM12-MMM1 complex. Essential for establishing and maintaining the structure of mitochondria and maintenance of mtDNA nucleoids. This chain is Mitochondrial distribution and morphology protein 12, found in Arthroderma otae (strain ATCC MYA-4605 / CBS 113480) (Microsporum canis).